The sequence spans 212 residues: Adenylate kinase (212 aa).

10-15 (GAGKGT) lines the ATP pocket. The tract at residues 30 to 59 (STGDMFRAAMANQTEMGVLAKSYIDKGELV) is NMP. AMP contacts are provided by residues threonine 31, arginine 36, 57–59 (ELV), 86–89 (GYPR), and glutamine 93. Positions 127–159 (GRIIHRVTGETFHKVFNPPVDYKEEDYYQREDD) are LID. ATP contacts are provided by residues arginine 128 and 137–138 (TF). AMP is bound by residues arginine 156 and arginine 167. Position 195 (glutamine 195) interacts with ATP.

This sequence belongs to the adenylate kinase family. Monomer.

It localises to the cytoplasm. It catalyses the reaction AMP + ATP = 2 ADP. It functions in the pathway purine metabolism; AMP biosynthesis via salvage pathway; AMP from ADP: step 1/1. Its function is as follows. Catalyzes the reversible transfer of the terminal phosphate group between ATP and AMP. Plays an important role in cellular energy homeostasis and in adenine nucleotide metabolism. The protein is Adenylate kinase of Streptococcus pneumoniae serotype 4 (strain ATCC BAA-334 / TIGR4).